The sequence spans 310 residues: Porphobilinogen deaminase (310 aa).

S-(dipyrrolylmethanemethyl)cysteine is present on cysteine 241.

This sequence belongs to the HMBS family. As to quaternary structure, monomer. The cofactor is dipyrromethane.

The catalysed reaction is 4 porphobilinogen + H2O = hydroxymethylbilane + 4 NH4(+). The protein operates within porphyrin-containing compound metabolism; protoporphyrin-IX biosynthesis; coproporphyrinogen-III from 5-aminolevulinate: step 2/4. In terms of biological role, tetrapolymerization of the monopyrrole PBG into the hydroxymethylbilane pre-uroporphyrinogen in several discrete steps. This Pelobacter propionicus (strain DSM 2379 / NBRC 103807 / OttBd1) protein is Porphobilinogen deaminase.